A 435-amino-acid chain; its full sequence is Ribulose bisphosphate carboxylase large chain (435 aa).

Substrate-binding residues include asparagine 104 and threonine 154. Lysine 156 acts as the Proton acceptor in catalysis. A substrate-binding site is contributed by lysine 158. 3 residues coordinate Mg(2+): lysine 182, aspartate 184, and glutamate 185. Lysine 182 carries the N6-carboxylysine modification. The active-site Proton acceptor is the histidine 275. Substrate contacts are provided by arginine 276, histidine 308, and serine 360.

It belongs to the RuBisCO large chain family. Type I subfamily. In terms of assembly, heterohexadecamer of 8 large chains and 8 small chains. Mg(2+) serves as cofactor.

It localises to the plastid. Its subcellular location is the chloroplast. It catalyses the reaction 2 (2R)-3-phosphoglycerate + 2 H(+) = D-ribulose 1,5-bisphosphate + CO2 + H2O. It carries out the reaction D-ribulose 1,5-bisphosphate + O2 = 2-phosphoglycolate + (2R)-3-phosphoglycerate + 2 H(+). RuBisCO catalyzes two reactions: the carboxylation of D-ribulose 1,5-bisphosphate, the primary event in carbon dioxide fixation, as well as the oxidative fragmentation of the pentose substrate in the photorespiration process. Both reactions occur simultaneously and in competition at the same active site. In Euglena pisciformis, this protein is Ribulose bisphosphate carboxylase large chain.